The primary structure comprises 1293 residues: Receptor-type tyrosine-protein phosphatase C (1293 aa).

Residues M1 to G25 form the signal peptide. Residues Q26–K566 lie on the Extracellular side of the membrane. Residues L43–S174 form a disordered region. Polar residues-rich tracts occupy residues T53–T72, Q88–N110, and L149–I169. N66 is a glycosylation site (N-linked (GlcNAc...) asparagine). N-linked (GlcNAc...) asparagine glycans are attached at residues N152, N163, N209, N213, N220, N255, N260, N292, N313, N324, N349, N418, N429, N459, and N491. 2 Fibronectin type-III domains span residues I376–D472 and R473–L568. The chain crosses the membrane as a helical span at residues A567–Y588. Residues K589–S1293 are Cytoplasmic-facing. Tyrosine-protein phosphatase domains follow at residues F642 to Y901 and L933 to I1216. Y672 bears the Phosphotyrosine mark. Substrate contacts are provided by residues D810, C842–R848, and Q886. Residue C842 is the Phosphocysteine intermediate of the active site. 7 positions are modified to phosphoserine: S964, S983, S986, S990, S993, S994, and S998. The segment at L980–T1003 is disordered. Residues P988–E1001 are compositionally biased toward acidic residues. The active-site Phosphocysteine intermediate is the C1157. S1229 is subject to Phosphoserine. The interval D1240 to S1293 is disordered. Residue T1267 is modified to Phosphothreonine. Residues G1283–S1293 show a composition bias toward polar residues. S1286 bears the Phosphoserine mark.

It belongs to the protein-tyrosine phosphatase family. Receptor class 1/6 subfamily. As to quaternary structure, interacts with SKAP1. Interacts with DPP4; the interaction is enhanced in an interleukin-12-dependent manner in activated lymphocytes. Binds GANAB and PRKCSH. Interacts with CD53; this interaction stabilizes PTPRC on the membrane and is required for optimal phosphatase activity. Interacts with CLEC10A. In terms of processing, heavily N- and O-glycosylated.

It is found in the cell membrane. It localises to the membrane raft. Its subcellular location is the synapse. It carries out the reaction O-phospho-L-tyrosyl-[protein] + H2O = L-tyrosyl-[protein] + phosphate. Its function is as follows. Protein tyrosine-protein phosphatase required for T-cell activation through the antigen receptor. Acts as a positive regulator of T-cell coactivation upon binding to DPP4. The first PTPase domain has enzymatic activity, while the second one seems to affect the substrate specificity of the first one. Upon T-cell activation, recruits and dephosphorylates SKAP1 and FYN. Dephosphorylates LYN, and thereby modulates LYN activity. Interacts with CLEC10A at antigen presenting cell-T cell contact; CLEC10A on immature dendritic cells recognizes Tn antigen-carrying PTPRC/CD45 receptor on effector T cells and modulates T cell activation threshold to limit autoreactivity. This Mus musculus (Mouse) protein is Receptor-type tyrosine-protein phosphatase C.